A 616-amino-acid polypeptide reads, in one-letter code: Dihydroxy-acid dehydratase (616 aa).

Aspartate 81 contacts Mg(2+). Cysteine 122 provides a ligand contact to [2Fe-2S] cluster. 2 residues coordinate Mg(2+): aspartate 123 and lysine 124. Lysine 124 is subject to N6-carboxylysine. Cysteine 195 is a binding site for [2Fe-2S] cluster. Position 491 (glutamate 491) interacts with Mg(2+). The active-site Proton acceptor is serine 517.

This sequence belongs to the IlvD/Edd family. Homodimer. The cofactor is [2Fe-2S] cluster. Mg(2+) serves as cofactor.

The catalysed reaction is (2R)-2,3-dihydroxy-3-methylbutanoate = 3-methyl-2-oxobutanoate + H2O. The enzyme catalyses (2R,3R)-2,3-dihydroxy-3-methylpentanoate = (S)-3-methyl-2-oxopentanoate + H2O. It participates in amino-acid biosynthesis; L-isoleucine biosynthesis; L-isoleucine from 2-oxobutanoate: step 3/4. The protein operates within amino-acid biosynthesis; L-valine biosynthesis; L-valine from pyruvate: step 3/4. Functions in the biosynthesis of branched-chain amino acids. Catalyzes the dehydration of (2R,3R)-2,3-dihydroxy-3-methylpentanoate (2,3-dihydroxy-3-methylvalerate) into 2-oxo-3-methylpentanoate (2-oxo-3-methylvalerate) and of (2R)-2,3-dihydroxy-3-methylbutanoate (2,3-dihydroxyisovalerate) into 2-oxo-3-methylbutanoate (2-oxoisovalerate), the penultimate precursor to L-isoleucine and L-valine, respectively. This is Dihydroxy-acid dehydratase from Klebsiella pneumoniae subsp. pneumoniae (strain ATCC 700721 / MGH 78578).